The chain runs to 124 residues: Small ribosomal subunit protein bS6 (124 aa).

It belongs to the bacterial ribosomal protein bS6 family.

Functionally, binds together with bS18 to 16S ribosomal RNA. This Haemophilus ducreyi (strain 35000HP / ATCC 700724) protein is Small ribosomal subunit protein bS6.